The following is a 501-amino-acid chain: Protein translocase subunit SecD (501 aa).

6 helical membrane passes run 9-29, 339-359, 371-391, 394-414, 447-467, and 470-490; these read NLWL…YAVV, AIEQ…VVLI, ISIF…GATL, PGIA…VLIF, VTLL…VKGF, and TLAL…KVFL.

The protein belongs to the SecD/SecF family. SecD subfamily. Forms a complex with SecF. Part of the essential Sec protein translocation apparatus which comprises SecA, SecYEG and auxiliary proteins SecDF. Other proteins may also be involved.

It is found in the cell inner membrane. Its function is as follows. Part of the Sec protein translocase complex. Interacts with the SecYEG preprotein conducting channel. SecDF uses the proton motive force (PMF) to complete protein translocation after the ATP-dependent function of SecA. The polypeptide is Protein translocase subunit SecD (Aquifex aeolicus (strain VF5)).